The chain runs to 28 residues: Ranatuerin-2LT (28 aa).

Cys23 and Cys28 are joined by a disulfide.

As to expression, expressed by the skin glands.

It localises to the secreted. Has antibacterial activity. The protein is Ranatuerin-2LT of Rana latastei (Italian agile frog).